Here is a 229-residue protein sequence, read N- to C-terminus: Large ribosomal subunit protein uL1 (229 aa).

Belongs to the universal ribosomal protein uL1 family. In terms of assembly, part of the 50S ribosomal subunit.

Functionally, binds directly to 23S rRNA. The L1 stalk is quite mobile in the ribosome, and is involved in E site tRNA release. Its function is as follows. Protein L1 is also a translational repressor protein, it controls the translation of the L11 operon by binding to its mRNA. This is Large ribosomal subunit protein uL1 from Mycoplasmopsis pulmonis (strain UAB CTIP) (Mycoplasma pulmonis).